Consider the following 359-residue polypeptide: Pyruvate dehydrogenase E1 component subunit beta, mitochondrial (359 aa).

A mitochondrion-targeting transit peptide spans 1–30; that stretch reads MAAVAGLVRGPLRQASGLLKRRFHRSAPAA. Tyrosine 67 bears the Phosphotyrosine mark. Position 89 (glutamate 89) interacts with thiamine diphosphate. Isoleucine 142, alanine 190, isoleucine 191, aspartate 193, and asparagine 195 together coordinate K(+). Residue lysine 354 is modified to N6-acetyllysine.

As to quaternary structure, heterotetramer of two PDHA1 and two PDHB subunits. The heterotetramer interacts with DLAT, and is part of the multimeric pyruvate dehydrogenase complex that contains multiple copies of pyruvate dehydrogenase (E1), dihydrolipoamide acetyltransferase (DLAT, E2) and lipoamide dehydrogenase (DLD, E3). These subunits are bound to an inner core composed of about 48 DLAT and 12 PDHX molecules. Interacts with DLAT. Requires thiamine diphosphate as cofactor.

Its subcellular location is the mitochondrion matrix. The enzyme catalyses N(6)-[(R)-lipoyl]-L-lysyl-[protein] + pyruvate + H(+) = N(6)-[(R)-S(8)-acetyldihydrolipoyl]-L-lysyl-[protein] + CO2. In terms of biological role, the pyruvate dehydrogenase complex catalyzes the overall conversion of pyruvate to acetyl-CoA and CO(2), and thereby links the glycolytic pathway to the tricarboxylic cycle. In Rattus norvegicus (Rat), this protein is Pyruvate dehydrogenase E1 component subunit beta, mitochondrial (Pdhb).